The sequence spans 325 residues: Histone-lysine N-methyltransferase ATXR4 (325 aa).

A signal peptide spans 1–30 (MSRLALNRYSRCFSRLKTLTTPLFFSSSAA). The region spanning 42 to 295 (PPIRVGLTES…EGEELRICYI (254 aa)) is the SET domain.

It belongs to the class V-like SAM-binding methyltransferase superfamily. Histone-lysine methyltransferase family. TRX/MLL subfamily.

The protein resides in the nucleus. It catalyses the reaction L-lysyl-[histone] + S-adenosyl-L-methionine = N(6)-methyl-L-lysyl-[histone] + S-adenosyl-L-homocysteine + H(+). Functionally, histone methyltransferase. The sequence is that of Histone-lysine N-methyltransferase ATXR4 (ATXR4) from Arabidopsis thaliana (Mouse-ear cress).